A 529-amino-acid chain; its full sequence is F-box/LRR-repeat protein At5g63520 (529 aa).

The segment at 1–22 (MAEVSLTKKEMTTKGKSENSKK) is disordered. The F-box domain maps to 31 to 78 (VPIAAMNEDLLHNILLRLPAKSFAFASCVNRFWSSVCNRILSRPKMIS). LRR repeat units follow at residues 265-288 (GNEP…IFAR) and 418-441 (QVYL…LRNL).

This is F-box/LRR-repeat protein At5g63520 from Arabidopsis thaliana (Mouse-ear cress).